Here is a 186-residue protein sequence, read N- to C-terminus: ATP synthase subunit delta (186 aa).

The protein belongs to the ATPase delta chain family. F-type ATPases have 2 components, F(1) - the catalytic core - and F(0) - the membrane proton channel. F(1) has five subunits: alpha(3), beta(3), gamma(1), delta(1), epsilon(1). F(0) has three main subunits: a(1), b(2) and c(10-14). The alpha and beta chains form an alternating ring which encloses part of the gamma chain. F(1) is attached to F(0) by a central stalk formed by the gamma and epsilon chains, while a peripheral stalk is formed by the delta and b chains.

Its subcellular location is the cell inner membrane. Functionally, f(1)F(0) ATP synthase produces ATP from ADP in the presence of a proton or sodium gradient. F-type ATPases consist of two structural domains, F(1) containing the extramembraneous catalytic core and F(0) containing the membrane proton channel, linked together by a central stalk and a peripheral stalk. During catalysis, ATP synthesis in the catalytic domain of F(1) is coupled via a rotary mechanism of the central stalk subunits to proton translocation. This protein is part of the stalk that links CF(0) to CF(1). It either transmits conformational changes from CF(0) to CF(1) or is implicated in proton conduction. The protein is ATP synthase subunit delta of Nitrobacter hamburgensis (strain DSM 10229 / NCIMB 13809 / X14).